Here is a 270-residue protein sequence, read N- to C-terminus: Protein MGF 110-1L (270 aa).

The first 26 residues, 1–26 (MLGLQIITLLFIPTLLYAYELEPLER), serve as a signal peptide directing secretion. Residues 1-146 (MLGLQIITLL…YIRKRSLQTI (146 aa)) form an A repeat. An N-linked (GlcNAc...) asparagine; by host glycan is attached at asparagine 75. Transmembrane regions (helical) follow at residues 118–138 (WQKLLTYGFYLVGCVLVVNYI) and 146–166 (IVYLLVLLVIFFLLSQLMLYR). Residues 147-270 (VYLLVLLVIF…DNLMKKQDIM (124 aa)) form a B repeat.

This sequence belongs to the asfivirus MGF 110 family.

Its subcellular location is the membrane. Its function is as follows. Plays a role in virus cell tropism, and may be required for efficient virus replication in macrophages. The protein is Protein MGF 110-1L of Ornithodoros (relapsing fever ticks).